The sequence spans 485 residues: Acyltransferase cm3D (485 aa).

H169 (proton acceptor) is an active-site residue.

It belongs to the plant acyltransferase family. As to quaternary structure, monomer.

It functions in the pathway secondary metabolite biosynthesis. Functionally, acyltransferase; part of the gene cluster that mediates the biosynthesis of beauveriolides I and III, cyclodepsipeptides acting as inhibitors of the acyl-CoA:cholesterol acyltransferase. The HR-PKS cm3B initiates the biosynthesis of beauveriolides by iteratively catalyzing the formation of the linear polyketide chain. The ATP-dependent acetyl-CoA ligase cm3D converts the polyketide carboxylic acid to a CoA thioester which id shuttled to the first T domain in the NRPS cm3A by the acetyltransferase cm3C. Cm3A contains 13 domains and assembles the polyketide chain, L-phenylalanine, L-alanine, and D-leucine (or D-allo-isoleucine) to form beauveriolide I (or beauveriolide III). The production of both beauveriolides I and III suggests the substrate adaptability of cm3B, using different amino acids as substrates. The protein is Acyltransferase cm3D of Cordyceps militaris (strain CM01) (Caterpillar fungus).